Reading from the N-terminus, the 631-residue chain is Phosphomethylpyrimidine synthase (631 aa).

Substrate is bound by residues asparagine 239, methionine 268, tyrosine 297, histidine 333, 353–355, 394–397, and glutamate 433; these read SRG and DGLR. Histidine 437 contributes to the Zn(2+) binding site. Substrate is bound at residue tyrosine 460. Histidine 501 contacts Zn(2+). Residues cysteine 581, cysteine 584, and cysteine 589 each contribute to the [4Fe-4S] cluster site.

It belongs to the ThiC family. As to quaternary structure, homodimer. [4Fe-4S] cluster is required as a cofactor.

It catalyses the reaction 5-amino-1-(5-phospho-beta-D-ribosyl)imidazole + S-adenosyl-L-methionine = 4-amino-2-methyl-5-(phosphooxymethyl)pyrimidine + CO + 5'-deoxyadenosine + formate + L-methionine + 3 H(+). Its pathway is cofactor biosynthesis; thiamine diphosphate biosynthesis. Functionally, catalyzes the synthesis of the hydroxymethylpyrimidine phosphate (HMP-P) moiety of thiamine from aminoimidazole ribotide (AIR) in a radical S-adenosyl-L-methionine (SAM)-dependent reaction. This Shigella sonnei (strain Ss046) protein is Phosphomethylpyrimidine synthase.